The primary structure comprises 118 residues: Fluoride-specific ion channel FluC 2 (118 aa).

4 consecutive transmembrane segments (helical) span residues 1–21 (MIEA…RFAI), 33–53 (FPIA…YIIG), 55–75 (GVTT…FTTF), and 93–113 (TFLL…FLGM). The Na(+) site is built by Gly-70 and Thr-73.

It belongs to the fluoride channel Fluc/FEX (TC 1.A.43) family.

The protein localises to the cell membrane. The enzyme catalyses fluoride(in) = fluoride(out). Na(+) is not transported, but it plays an essential structural role and its presence is essential for fluoride channel function. In terms of biological role, fluoride-specific ion channel. Important for reducing fluoride concentration in the cell, thus reducing its toxicity. This chain is Fluoride-specific ion channel FluC 2, found in Bacillus cereus (strain ZK / E33L).